The sequence spans 166 residues: Keratin, type II cytoskeletal 68 kDa, component IB (166 aa).

The IF rod domain maps to 1 to 41; that stretch reads EAKDDLARLLRDYQDAMNVKLALDVEIATYRKLLEGEECRM. Residues 1–41 are coil 2B; it reads EAKDDLARLLRDYQDAMNVKLALDVEIATYRKLLEGEECRM. Positions 42–166 are tail; the sequence is SGECPSAVSI…FSQSSQRTSR (125 aa). Residues 122 to 146 are compositionally biased toward gly residues; the sequence is GFGGGSSGFGSGSGGRSGVSGGGLS. A disordered region spans residues 122-166; that stretch reads GFGGGSSGFGSGSGGRSGVSGGGLSSGSSRGGSVRFSQSSQRTSR. Low complexity predominate over residues 147–166; the sequence is SGSSRGGSVRFSQSSQRTSR.

Belongs to the intermediate filament family. As to quaternary structure, heterotetramer of two type I and two type II keratins.

The chain is Keratin, type II cytoskeletal 68 kDa, component IB from Bos taurus (Bovine).